The chain runs to 431 residues: Enolase (431 aa).

Q168 serves as a coordination point for (2R)-2-phosphoglycerate. E210 functions as the Proton donor in the catalytic mechanism. Positions 247, 291, and 318 each coordinate Mg(2+). 4 residues coordinate (2R)-2-phosphoglycerate: K343, R372, S373, and K394. The active-site Proton acceptor is K343.

It belongs to the enolase family. In terms of assembly, component of the RNA degradosome, a multiprotein complex involved in RNA processing and mRNA degradation. Mg(2+) is required as a cofactor.

The protein resides in the cytoplasm. Its subcellular location is the secreted. It localises to the cell surface. It carries out the reaction (2R)-2-phosphoglycerate = phosphoenolpyruvate + H2O. It participates in carbohydrate degradation; glycolysis; pyruvate from D-glyceraldehyde 3-phosphate: step 4/5. Its function is as follows. Catalyzes the reversible conversion of 2-phosphoglycerate (2-PG) into phosphoenolpyruvate (PEP). It is essential for the degradation of carbohydrates via glycolysis. This chain is Enolase, found in Acinetobacter baylyi (strain ATCC 33305 / BD413 / ADP1).